The following is a 72-amino-acid chain: U10-myrmicitoxin-Tb1a (72 aa).

The first 26 residues, 1-26, serve as a signal peptide directing secretion; sequence MRVSYLSLTLTIVVVIAIIYAPETEA. A propeptide spanning residues 27–36 is cleaved from the precursor; sequence KAWADADAEA.

The protein belongs to the formicidae venom precursor-01 superfamily. Expressed by the venom gland.

The protein localises to the secreted. In vivo, this neurotoxin paralyzes about 40% of blowflies (L.caesar) one hour after intrathoracic injection, when tested at high doses (28 nmol/g). This is U10-myrmicitoxin-Tb1a from Tetramorium bicarinatum (Tramp ant).